The primary structure comprises 187 residues: MARHVLVVVAVLLFATAEASQCSINGLPLVRNISELPQENYGRSGLSHTTIAGSVLHGMKEIEVWLQTFAPGSRTPIHRHSCEEIFVVLKGQGILYLTPSSHSKYPGNPQEFHIFPNSTFHIPVNDVHQVWNTGEHEDLQVLVVISRPPVKVFMYDDWSMPHTAAKLKFPYYWDEECYQTTSWKDEL.

An N-terminal signal peptide occupies residues 1–20 (MARHVLVVVAVLLFATAEAS). C22 and C177 form a disulfide bridge. Residues H78, H80, and E84 each contribute to the Zn(2+) site. An N-linked (GlcNAc...) asparagine glycan is attached at N117. H128 provides a ligand contact to Zn(2+). The short motif at 184–187 (KDEL) is the Prevents secretion from ER element.

In terms of assembly, homodimer.

The protein localises to the endoplasmic reticulum lumen. Functionally, this is probably a receptor for the plant hormone auxin. The chain is Auxin-binding protein T85 (T85) from Nicotiana tabacum (Common tobacco).